Reading from the N-terminus, the 232-residue chain is uncharacterized protein (232 aa).

A run of 5 helical transmembrane segments spans residues L69–F91, F104–L126, F139–L161, I166–S188, and F200–I219.

It is found in the cell membrane. This is an uncharacterized protein from Bacillus subtilis (strain 168).